The sequence spans 304 residues: Ribosomal RNA small subunit methyltransferase H (304 aa).

S-adenosyl-L-methionine contacts are provided by residues 37–39 (GGH), Asp57, Phe85, Asp100, and His107.

It belongs to the methyltransferase superfamily. RsmH family.

The protein resides in the cytoplasm. It carries out the reaction cytidine(1402) in 16S rRNA + S-adenosyl-L-methionine = N(4)-methylcytidine(1402) in 16S rRNA + S-adenosyl-L-homocysteine + H(+). Its function is as follows. Specifically methylates the N4 position of cytidine in position 1402 (C1402) of 16S rRNA. The polypeptide is Ribosomal RNA small subunit methyltransferase H (Azobacteroides pseudotrichonymphae genomovar. CFP2).